The sequence spans 98 residues: MSKVCEISGKRPIVANSIQRRGKAKREGGVGKKTTGISKRRQYPNLQKVRVRVAGQEITFRVAASHIPKVYELVERAKGLKLEGLSPKEIKKELLKLL.

As to quaternary structure, part of the 50S ribosomal subunit.

The chain is Large ribosomal subunit protein bL28 (rpmB) from Thermus thermophilus (strain ATCC 27634 / DSM 579 / HB8).